Reading from the N-terminus, the 303-residue chain is CDAN1-interacting nuclease 1 (303 aa).

It is found in the nucleus. It localises to the cytoplasm. May play a role in erythroid cell differentiation. In Xenopus tropicalis (Western clawed frog), this protein is CDAN1-interacting nuclease 1 (cdin1).